The following is a 588-amino-acid chain: Adenine deaminase (588 aa).

The protein belongs to the metallo-dependent hydrolases superfamily. Adenine deaminase family. In terms of assembly, homodimer. The cofactor is Mn(2+).

It catalyses the reaction adenine + H2O + H(+) = hypoxanthine + NH4(+). This is Adenine deaminase from Escherichia coli O6:H1 (strain CFT073 / ATCC 700928 / UPEC).